Consider the following 233-residue polypeptide: EEF1A lysine methyltransferase 2 (233 aa).

The protein belongs to the class I-like SAM-binding methyltransferase superfamily. EFM4 family.

It is found in the cytoplasm. The protein resides in the nucleus. It carries out the reaction L-lysyl-[protein] + 3 S-adenosyl-L-methionine = N(6),N(6),N(6)-trimethyl-L-lysyl-[protein] + 3 S-adenosyl-L-homocysteine + 3 H(+). In terms of biological role, protein-lysine methyltransferase that selectively catalyzes the trimethylation of EEF1A at 'Lys-318'. The polypeptide is EEF1A lysine methyltransferase 2 (Danio rerio (Zebrafish)).